Reading from the N-terminus, the 134-residue chain is Large ribosomal subunit protein bL17 (134 aa).

It belongs to the bacterial ribosomal protein bL17 family. Part of the 50S ribosomal subunit. Contacts protein L32.

This chain is Large ribosomal subunit protein bL17, found in Aromatoleum aromaticum (strain DSM 19018 / LMG 30748 / EbN1) (Azoarcus sp. (strain EbN1)).